A 263-amino-acid polypeptide reads, in one-letter code: Norsolorinic acid ketoreductase stcE (263 aa).

Positions 29, 76, 105, 177, 181, 208, and 210 each coordinate NADP(+). The active-site Proton donor is the Tyr177. The Lowers pKa of active site Tyr role is filled by Lys181.

It belongs to the short-chain dehydrogenases/reductases (SDR) family.

The enzyme catalyses (1'S)-averantin + NADP(+) = norsolorinic acid + NADPH + H(+). Its pathway is mycotoxin biosynthesis; sterigmatocystin biosynthesis. In terms of biological role, short chain dehydrogenase; part of the gene cluster that mediates the biosynthesis of sterigmatocystin (ST), a polyketide-derived furanocoumarin which is part of the most toxic and carcinogenic compounds among the known mycotoxins. The first step in the biosynthesis of sterigmatocystin is the production of hexanoate by the fatty acid synthase (FAS) units stcJ and stcK. The polyketide backbone is assembled by the non-reducing polyketide synthase stcA by condensation of the starter hexanoyl-CoA and 7 malonyl-CoA extender units followed by cyclization and release of norsolorinic acid. Norsolorinic acid is the first stable intermediate in the biosynthesis of sterigmatocystin and is converted into averantin (AVN) by the ketoreductase stcE which reduces the hexanoate ketone to an alcohol. Averantin is then oxidized into 5'-hydroxyaverantin (HAVN) by the cytochrome P450 monooxygenase stcF. 5'-hydroxyaverantin is further converted to 5'-oxyaverantin (OAVN) by the 5'-hydroxyaverantin dehydrogenase stcG. The next step is the conversion of OAVN into averufin (AVF) which is catalyzed by a yet to be identified enzyme. The cytochrome P450 monooxygenase stcB and the flavin-binding monooxygenase stcW are both required for the conversion of averufin to 1-hydroxyversicolorone. The esterase stcI probably catalyzes the formation of versiconal hemiacetal acetate from 1-hydroxyversicolorone. The oxydoreductase stcN then probably catalyzes the biosynthetic step from versiconal to versicolorin B (VERB). The next step is performed by the versicolorin B desaturase stcL to produce versicolorin A (VERA). The ketoreductase stcU and the cytochrome P450 monooxygenase stcS are involved in the conversion of versicolorin A to demethylsterigmatocystin. The Baeyer-Villiger oxidas stcQ and the reductase stcR might be involved in the biosynthetic step from versicolorin A to demethylsterigmatocystin. The final step in the biosynthesis of sterigmatocystin is the methylation of demethylsterigmatocystin catalyzed by the methyltransferase stcP. The chain is Norsolorinic acid ketoreductase stcE from Emericella nidulans (strain FGSC A4 / ATCC 38163 / CBS 112.46 / NRRL 194 / M139) (Aspergillus nidulans).